Reading from the N-terminus, the 220-residue chain is UPF0758 protein Asuc_0013 (220 aa).

The region spanning 98–220 (EFTNPLTVRL…YFSFAEQDWL (123 aa)) is the MPN domain. Residues His-169, His-171, and Asp-182 each coordinate Zn(2+). A JAMM motif motif is present at residues 169 to 182 (HNHPSGSAEPSASD).

Belongs to the UPF0758 family.

This Actinobacillus succinogenes (strain ATCC 55618 / DSM 22257 / CCUG 43843 / 130Z) protein is UPF0758 protein Asuc_0013.